A 2727-amino-acid polypeptide reads, in one-letter code: MGDVDPETLLEWLSMGQGDERDMQLIALEQLCMLLLMSDNVDRCFESCPPRTFLPALCKIFLDELAPENVLEVTARAITYYLDVSAECTRRIVSIDGAIKAICNHLVVADLSSRTSRDLAEQCIKVLELICTREAGAVFEGGGLNCVLSFIRDCGSQVHKDTLHSAMSVVSRLCTKVEPNTPCIQNCVESLSTLLQHEDPMVSDGALKCFASVADRFTRKWVDPAPLAEYGLTTELLKRLQSVGGNTHSSLTAAGTQPTSSSQPAATTNSDAINENVAGTATISNSTKVKSSDAAASPQSISTTISLLSTLCRGSPSITHDILRSQLADALERALQGDERCVLDCMRFADLLLLLLFEGRQALNRGSNNPNQGQLAPRPRRNNTNTDRTHRQLIDCIRSKDSEALREAIESGGIDVNCMDDVGQTLLNWASAFGTLEMVEYLCEKGADVNKGQRSSSLHYAACFGRPAIAKILLKFGAYPDLRDEDGKTPLDKARERLDDGHREVAAILQSPGEWMSPDHSLLNKDGKKYTLMEPRGDPEMAPIYLKVLLPIFCRTFLGSMLGSVRRASLALIKKIVQYAYPTVLQSLSETSFSEDAASTSGQNGGNLLIEVIASVLDNEDDGDGHLIVLNIIEEIMCKTQEEFLDHFARLGVFAKVQALMDTDAEELYVQLPGTVEEPAAAQRSSTSVVVAPRPTSDDPMEDAKEILQGKPYHWREWSICRGRDCLYVWSDSVALELSNGSNGWFRFIIDGKLATMYSSGSPENGNDSSENRGEFLEKLMRARSCVIAGVVSQPILPTASALRLVVGNWVLQSQKTNQLQIHNTEGHQVTVLQDDLPGFIFESNRGTKHTFSAETVLGPDFASGWSTAKKKRNKSKTEGQKFQVRNLSREIYNKYFKSAQIIPRGAVAILTDIVKQIELSFEEQHMAPNGNWETTLTDALMKLSQLIHEDGVVSAYEMHSSGLVQALVAVLSVNHWETNSPRCKRNKMQKQRVSVFKKCILEDNVESATNKPRTKSTASILIQKLVSVLESTEKLPVYLYDSPCTGYSLQILQKRLRFRLERAECESTLFDRSGRTLKMEPLATIGQLSKYLLKMVAKQWYDLDRSTYFYLKKIREHRTATVFTHSFDFDEEGLLFYIGSNAKTCDWVNPAQYGLVQVTSSEGKTLPYGKLEDILSRDSISLNCHTKDNKKAWFAIDLGVYIIPTAYTLRHARGYGRSALRNWLLQGSKDGSTWTTLSTHVDDKSLVEPGSTATWPINCATDDSVWYRHIRIQQNGRNASGQTHYLSLSGFEIYGRVVGVADDIGKSVKEAEAKTRRERRQIRAQLKHMTTGARVIRGVDWRWEEQDGCAEGTITGEIHNGWIDVKWDHGVRNSYRMGAEGKYDLKLADCEYLSAFDGNQSMGSASTAAKPSEKGGNTLTSRKSSSTPSLPEATEKNQNPEGASNQTVSADNLAWKQTVETIAENVFASAKTQIISNQLAMNTSSSREARAKHKESGTNQMHKDNISGPSPLSRELEHISDLSAINNSMPAINSSNVSDLATISENLSLTELSKENICRVLTPSYKPAESVTASQSSSHPDVQSSSPRENDIKNISNIEENNKMNANNSVNKISKDLLANLRTSNIAGCPPVTQLSTEALEMIDKMRDGVDMIRNMSNSILSTDTFPVPCTNVPVGGKKTPKAQALINPDNANQKQIIVTSEEFPTKSSKKPSVTLKPAQQPNAVLSIVDIKEQPISNENVSVPSQMSISVPNLTTTSASEVPSTSEVATHTGLLETFAAIARRRTSQGTNIQDNQIMNAEANVNEHGDQNASGSFLGHSVTSLVKLALSSNFHSGLLSTAQSYPSLSSNNSENIAPSNPSNTSAGQQSASTINHTLTMSLTSTSSDSEQVSLEDFLESCRAPALLGDLDDEDDMDEDNDEEENEDEYEEVGNTLLQVMVSRNLLTFMDDEAMENRLVGVTKRKSWDDEFVLKRQFSALIPAFDPRPGRTNVNQTSDLEISPLGAELPKPQQSGGPETIEQPLLGLKLRGPGIGGIPEVEIDLSNTDWTIFRAVQELLQCSQLNKLDKFRKIWEPTYTIVYREVSPEAQESTCLESEEFPQTPDVSSKSGASTLSPNSPMHIGFNVADNNLCSVDDVLELLTQINGLNQSEIDSDVKEHGVSVLSEDLFISKKITNKLQQQIQDPLVLASNALPNWCENLNQSCPFLFPFETRQLYFNCTSFGASRSIVCLQSQRDVTVERQRIPIMSPRRDDHEFRIGRLKHERVKVPRNEDLLMWAMQVMKTHCNRKSVLEVEFLDEEGTGLGPTLEFYALVAAEIQRSDLCMWLCDDDLGEDTENSTQSAEGNSKPVGYYVNRREHGIFPAPLPQNSEICENVLKYFWFFGVFVAKVLQDMRLVDIPLSTSFLQLLCHNKVLSRNLQKVISDRRNGDLSVVSEDSDIVETCTKLLRTDSNKSNAFGGILSLENLKEIDPTRYQFLQEMQNLLLRKQSIEFDDTISAEKKHELINELKLQTQNGLEVSLEDLALTFTYLPSSSIYGYTQAELLPNGSSVNVTIDNLEAYCELLMNFILQDGIAQQMKAFSDGFNEVFPLKKLAAFTPSEARMMICGEQFPHWSREDIISYTEPKLGYNKDSPGFQRFVNVLLSMSGDERKAFLQFTTGCSSLPPGGLANLHPRLTVVRKVDAGVGSYPSVNTCVHYLKLPDYPTEEIMKERLLTATKEKGFHLN.

2 disordered regions span residues 247–271 and 365–389; these read THSS…TNSD and RGSN…TDRT. A compositionally biased stretch (polar residues) spans 365 to 374; that stretch reads RGSNNPNQGQ. ANK repeat units follow at residues 422 to 451, 453 to 482, and 486 to 518; these read VGQT…DVNK, QRSS…YPDL, and DGKT…WMSP. Residues 682-702 form a disordered region; sequence AQRSSTSVVVAPRPTSDDPME. The MIB/HERC2 domain maps to 1322–1392; sequence QIRAQLKHMT…KYDLKLADCE (71 aa). 2 stretches are compositionally biased toward polar residues: residues 1401–1430 and 1437–1448; these read QSMG…STPS and KNQNPEGASNQT. Disordered regions lie at residues 1401–1448, 1483–1512, 1570–1592, 1845–1871, 1905–1930, and 2092–2115; these read QSMG…SNQT, NTSS…GPSP, ESVT…REND, YPSL…QQSA, ALLG…DEYE, and STCL…ASTL. The span at 1575–1592 shows a compositional bias: low complexity; that stretch reads SQSSSHPDVQSSSPREND. Over residues 1909 to 1930 the composition is skewed to acidic residues; that stretch reads DLDDEDDMDEDNDEEENEDEYE. Positions 2104 to 2115 are enriched in polar residues; the sequence is PDVSSKSGASTL. The HECT domain maps to 2289–2727; the sequence is RKSVLEVEFL…ATKEKGFHLN (439 aa). The active-site Glycyl thioester intermediate is cysteine 2696.

The protein belongs to the UPL family. K-HECT subfamily.

The enzyme catalyses S-ubiquitinyl-[E2 ubiquitin-conjugating enzyme]-L-cysteine + [acceptor protein]-L-lysine = [E2 ubiquitin-conjugating enzyme]-L-cysteine + N(6)-ubiquitinyl-[acceptor protein]-L-lysine.. Its pathway is protein modification; protein ubiquitination. Functionally, E3 ubiquitin-protein ligase which accepts ubiquitin from an E2 ubiquitin-conjugating enzyme in the form of a thioester and then directly transfers the ubiquitin to targeted substrates. Involved in the negative regulation of the Ras/MAPK signaling pathway in the wing by acting with the E2 enzyme Unc6 and the putative E3 ligases poe and Kcmf1 to mediate the ubiquitination and proteasomal degradation of rl/MAPK. This chain is E3 ubiquitin-protein ligase Ufd4, found in Drosophila melanogaster (Fruit fly).